Consider the following 412-residue polypeptide: Multifunctional CCA protein (412 aa).

ATP contacts are provided by Gly8 and Arg11. The CTP site is built by Gly8 and Arg11. Mg(2+) contacts are provided by Asp21 and Asp23. Residues Arg91, Arg137, and Arg140 each contribute to the ATP site. CTP-binding residues include Arg91, Arg137, and Arg140. The HD domain occupies 228 to 329 (TGIHTLMTLS…VKLFDSIDAW (102 aa)).

This sequence belongs to the tRNA nucleotidyltransferase/poly(A) polymerase family. Bacterial CCA-adding enzyme type 1 subfamily. As to quaternary structure, monomer. Can also form homodimers and oligomers. Requires Mg(2+) as cofactor. It depends on Ni(2+) as a cofactor.

It catalyses the reaction a tRNA precursor + 2 CTP + ATP = a tRNA with a 3' CCA end + 3 diphosphate. It carries out the reaction a tRNA with a 3' CCA end + 2 CTP + ATP = a tRNA with a 3' CCACCA end + 3 diphosphate. Its function is as follows. Catalyzes the addition and repair of the essential 3'-terminal CCA sequence in tRNAs without using a nucleic acid template. Adds these three nucleotides in the order of C, C, and A to the tRNA nucleotide-73, using CTP and ATP as substrates and producing inorganic pyrophosphate. tRNA 3'-terminal CCA addition is required both for tRNA processing and repair. Also involved in tRNA surveillance by mediating tandem CCA addition to generate a CCACCA at the 3' terminus of unstable tRNAs. While stable tRNAs receive only 3'-terminal CCA, unstable tRNAs are marked with CCACCA and rapidly degraded. The sequence is that of Multifunctional CCA protein from Shigella dysenteriae serotype 1 (strain Sd197).